Here is a 141-residue protein sequence, read N- to C-terminus: VLSGDDKSNLKTAWGKLGGHAGEYGAEALERMFVAYPTTKTYFPHFDVSHGSAQVKGHGKKVADALTTAVGHLDDLPGALSALSDLHAHKLRVDPVNFKLLSHCLLVTLANHLPADFTPAVHASLDKFLASVSTVLTSKYR.

Residues Val1 to Arg141 form the Globin domain. Residue Ser3 is modified to Phosphoserine. Lys7 and Lys11 each carry N6-succinyllysine. Residue Lys16 is modified to N6-acetyllysine; alternate. Lys16 is modified (N6-succinyllysine; alternate). Tyr24 carries the post-translational modification Phosphotyrosine. N6-succinyllysine is present on Lys40. Ser49 bears the Phosphoserine mark. His58 contacts O2. Position 87 (His87) interacts with heme b. Ser102 is subject to Phosphoserine. Thr108 is modified (phosphothreonine). Residues Ser124 and Ser131 each carry the phosphoserine modification. Residues Thr134 and Thr137 each carry the phosphothreonine modification. Position 138 is a phosphoserine (Ser138).

It belongs to the globin family. Heterotetramer of two alpha chains and two beta chains. Red blood cells.

Its function is as follows. Involved in oxygen transport from the lung to the various peripheral tissues. The protein is Hemoglobin subunit alpha of Microtus pennsylvanicus (Meadow vole).